The sequence spans 123 residues: Ribosome-binding factor A (123 aa).

It belongs to the RbfA family. Monomer. Binds 30S ribosomal subunits, but not 50S ribosomal subunits or 70S ribosomes.

The protein resides in the cytoplasm. Its function is as follows. One of several proteins that assist in the late maturation steps of the functional core of the 30S ribosomal subunit. Associates with free 30S ribosomal subunits (but not with 30S subunits that are part of 70S ribosomes or polysomes). Required for efficient processing of 16S rRNA. May interact with the 5'-terminal helix region of 16S rRNA. In Neisseria gonorrhoeae (strain ATCC 700825 / FA 1090), this protein is Ribosome-binding factor A.